Consider the following 583-residue polypeptide: Torsin-1A-interacting protein 1 (583 aa).

A compositionally biased stretch (basic and acidic residues) spans 1-12 (MAGDGRRAEAVR). Disordered regions lie at residues 1 to 254 (MAGD…RSSS) and 271 to 293 (AHDK…WAPQ). Residues 1 to 338 (MAGDGRRAEA…NASFVKRNRW (338 aa)) lie on the Nuclear side of the membrane. Phosphoserine is present on S60. Composition is skewed to basic and acidic residues over residues 74–101 (VAKE…EVRE) and 115–124 (RPQETEEMKT). Residues S135 and S143 each carry the phosphoserine modification. At M146 the chain carries Methionine sulfoxide. Phosphoserine occurs at positions 154, 156, and 157. Residues 165–174 (QTDLSQTISK) are compositionally biased toward polar residues. S186 and S215 each carry phosphoserine. Acidic residues predominate over residues 216–225 (EEGETEEDDQ). Position 220 is a phosphothreonine (T220). Residues S227, S230, and S242 each carry the phosphoserine modification. Residues 238–250 (RSRDSDESGDKTT) show a composition bias toward basic and acidic residues. Over residues 277 to 287 (SVLSSGYQKTP) the composition is skewed to polar residues. Residue M301 is modified to Methionine sulfoxide. S305 is modified (phosphoserine). A Glycyl lysine isopeptide (Lys-Gly) (interchain with G-Cter in SUMO2) cross-link involves residue K308. S309 and S315 each carry phosphoserine. A disordered region spans residues 309-328 (SELGNQSPSTSSRQVTGQPQ). A helical transmembrane segment spans residues 339-355 (WLLPLIAALASGSFWFF). The Perinuclear space segment spans residues 356–583 (STPEVETTAV…ENALKRGICL (228 aa)). The segment at 356-583 (STPEVETTAV…ENALKRGICL (228 aa)) is interaction with TOR1A. Positions 359–435 (EVETTAVQEF…SEQIADAYSS (77 aa)) form a coiled coil. N399 is a glycosylation site (N-linked (GlcNAc...) asparagine). A Methionine sulfoxide modification is found at M552.

The protein belongs to the TOR1AIP family. Interacts with ATP1B4. Interacts with TOR1A (ATP-bound). Interacts with TOR1B, TOR2A and TOR3A. Interacts with VIM. Post-translationally, phosphorylated. Dephosphorylated at Ser-309 and Ser-315 by serine/threonine-protein phosphatase PP1. In terms of tissue distribution, expressed in muscle, liver and kidney. Major isoform present in liver, brain and heart (at protein level). Expressed at lower levels than isoform 4 in lung, kidney and spleen (at protein level). Similar levels of isoforms 1 and 4 are observed in ovary, testis and pancreas (at protein level). As to expression, expressed at higher levels than isoform 1 in lung, kidney and spleen (at protein level). Expressed at lower levels than isoform 1 in liver, brain and heart (at protein level). Similar levels of isoforms 1 and 4 are observed in ovary, testis and pancreas (at protein level).

The protein resides in the nucleus inner membrane. It localises to the nucleus envelope. The protein localises to the nucleus. In terms of biological role, required for nuclear membrane integrity. Induces TOR1A and TOR1B ATPase activity and is required for their location on the nuclear membrane. Binds to A- and B-type lamins. Possible role in membrane attachment and assembly of the nuclear lamina. This Homo sapiens (Human) protein is Torsin-1A-interacting protein 1 (TOR1AIP1).